Consider the following 214-residue polypeptide: Outer membrane lipoprotein MapA (214 aa).

An N-terminal signal peptide occupies residues 1 to 17 (MFKKFLIFIVPILFLSA). A lipid anchor (N-palmitoyl cysteine) is attached at cysteine 18. Cysteine 18 carries the S-diacylglycerol cysteine lipid modification.

Its subcellular location is the cell outer membrane. This Campylobacter jejuni subsp. jejuni serotype O:6 (strain 81116 / NCTC 11828) protein is Outer membrane lipoprotein MapA (mapA).